The chain runs to 135 residues: Agouti-signaling protein (135 aa).

An N-terminal signal peptide occupies residues 1–22 (MNILRLLLATLLVCLCLLTAYS). An N-linked (GlcNAc...) asparagine glycan is attached at Asn-39. A disordered region spans residues 56 to 101 (NKKSKKISRKEAEKKRSSKKKASMKNVAQPRRPRPPPPAPCVATRD). Cystine bridges form between Cys-96–Cys-111, Cys-103–Cys-117, Cys-110–Cys-128, Cys-114–Cys-135, and Cys-119–Cys-126. In terms of domain architecture, Agouti spans 96 to 135 (CVATRDSCKPPAPACCDPCASCQCRFFRSSCSCRVLNPTC).

Its subcellular location is the secreted. In terms of biological role, involved in the regulation of melanogenesis. The binding of ASP to MC1R precludes alpha-MSH initiated signaling and thus blocks production of cAMP, leading to a down-regulation of eumelanogenesis (brown/black pigment) and thus increasing synthesis of pheomelanin (yellow/red pigment). The polypeptide is Agouti-signaling protein (ASIP) (Felis catus (Cat)).